The sequence spans 147 residues: Large ribosomal subunit protein uL13 (147 aa).

Positions 126 to 147 (GGPEHPHAAQNPQPYEITQIAQ) are disordered.

It belongs to the universal ribosomal protein uL13 family. As to quaternary structure, part of the 50S ribosomal subunit.

This protein is one of the early assembly proteins of the 50S ribosomal subunit, although it is not seen to bind rRNA by itself. It is important during the early stages of 50S assembly. The protein is Large ribosomal subunit protein uL13 of Cutibacterium acnes (strain DSM 16379 / KPA171202) (Propionibacterium acnes).